Consider the following 626-residue polypeptide: Ankyrin repeat domain-containing protein 13B (626 aa).

The residue at position 1 (Met1) is an N-acetylmethionine. ANK repeat units follow at residues 47–76 (RGRTPLHLATTLGHLECARVLLAHGADVGR) and 80–109 (SGWTVLQEAVSTRDLELVQLVLRYRDYQRV). The tract at residues 442–474 (PVPSVRGSPSSETPSPGSDSSSVSSSSSTTSCR) is disordered. The span at 449 to 472 (SPSSETPSPGSDSSSVSSSSSTTS) shows a compositional bias: low complexity. A UIM 1 domain is found at 503 to 522 (DDDDLLQFAIQQSLLEAGSE). Disordered regions lie at residues 534–590 (NSKP…DEQL) and 595–614 (ELSAQEQEERRRRARQEEEE). Residues 554-573 (PPTPQRQPAPPASVPSPRPS) are compositionally biased toward pro residues. UIM domains lie at 585-604 (SYDEQLRLAMELSAQEQEER) and 610-626 (QEEEELERILRLSLTEQ).

As to quaternary structure, interacts with EGFR (ubiquitinated); the interaction is direct and may regulate EGFR internalization.

Its subcellular location is the cell membrane. The protein resides in the late endosome. The protein localises to the early endosome. Its function is as follows. Ubiquitin-binding protein that specifically recognizes and binds 'Lys-63'-linked ubiquitin. Does not bind 'Lys-48'-linked ubiquitin. Positively regulates the internalization of ligand-activated EGFR by binding to the Ub moiety of ubiquitinated EGFR at the cell membrane. This Homo sapiens (Human) protein is Ankyrin repeat domain-containing protein 13B (ANKRD13B).